Reading from the N-terminus, the 284-residue chain is UDP-N-acetylenolpyruvoylglucosamine reductase (284 aa).

Residues 12-174 (KIGGRVKYLV…TRVMMSFKRE (163 aa)) form the FAD-binding PCMH-type domain. Residue R153 is part of the active site. Residue S203 is the Proton donor of the active site. E274 is an active-site residue.

Belongs to the MurB family. FAD serves as cofactor.

The protein localises to the cytoplasm. The enzyme catalyses UDP-N-acetyl-alpha-D-muramate + NADP(+) = UDP-N-acetyl-3-O-(1-carboxyvinyl)-alpha-D-glucosamine + NADPH + H(+). The protein operates within cell wall biogenesis; peptidoglycan biosynthesis. Cell wall formation. The sequence is that of UDP-N-acetylenolpyruvoylglucosamine reductase from Thermotoga petrophila (strain ATCC BAA-488 / DSM 13995 / JCM 10881 / RKU-1).